Here is a 510-residue protein sequence, read N- to C-terminus: NAD(P)H-quinone oxidoreductase subunit 2 B, chloroplastic (510 aa).

Helical transmembrane passes span 24–44 (LLLF…GLIL), 57–77 (ISWF…VLLF), 99–119 (IFQF…VEYI), 124–144 (MAIT…MFLC), 149–169 (LITI…LSGY), 183–203 (YLLM…WLYG), 227–247 (PGIS…LSLA), 295–315 (WHLL…LIAI), 323–343 (MLAY…IVGD), 354–374 (YMLF…SFGL), 395–415 (ALSL…AGFF), 418–438 (LYLF…IGLL), and 482–502 (LSMI…NPII).

It belongs to the complex I subunit 2 family. NDH is composed of at least 16 different subunits, 5 of which are encoded in the nucleus.

The protein localises to the plastid. The protein resides in the chloroplast thylakoid membrane. The enzyme catalyses a plastoquinone + NADH + (n+1) H(+)(in) = a plastoquinol + NAD(+) + n H(+)(out). The catalysed reaction is a plastoquinone + NADPH + (n+1) H(+)(in) = a plastoquinol + NADP(+) + n H(+)(out). In terms of biological role, NDH shuttles electrons from NAD(P)H:plastoquinone, via FMN and iron-sulfur (Fe-S) centers, to quinones in the photosynthetic chain and possibly in a chloroplast respiratory chain. The immediate electron acceptor for the enzyme in this species is believed to be plastoquinone. Couples the redox reaction to proton translocation, and thus conserves the redox energy in a proton gradient. The polypeptide is NAD(P)H-quinone oxidoreductase subunit 2 B, chloroplastic (Lotus japonicus (Lotus corniculatus var. japonicus)).